A 624-amino-acid chain; its full sequence is Phosphatidylinositol 4-kinase lsb6 (624 aa).

Residues 1-31 (MESTFHSDTLDSFPNYQENSLNTNEEQTNPL) are compositionally biased toward polar residues. The disordered stretch occupies residues 1-53 (MESTFHSDTLDSFPNYQENSLNTNEEQTNPLESLRDGWASSNSSSSSSLLLPD). A compositionally biased stretch (low complexity) spans 40 to 51 (SSNSSSSSSLLL). One can recognise a PI3K/PI4K catalytic domain in the interval 145 to 520 (GVFPVLISKG…LLELPNLYVV (376 aa)). Residues 151–157 (ISKGSSG) form a G-loop region. The segment at 346–354 (RNTDRNLDN) is catalytic loop. The tract at residues 409-429 (AIDNSLAFPYKHPDSWRSFPY) is activation loop.

This sequence belongs to the PI3/PI4-kinase family. It depends on Mg(2+) as a cofactor. The cofactor is Mn(2+).

It is found in the cell membrane. It localises to the vacuole membrane. The protein resides in the golgi apparatus membrane. The catalysed reaction is a 1,2-diacyl-sn-glycero-3-phospho-(1D-myo-inositol) + ATP = a 1,2-diacyl-sn-glycero-3-phospho-(1D-myo-inositol 4-phosphate) + ADP + H(+). Its function is as follows. May play a role in endocytic and/or exocytic pathways. The sequence is that of Phosphatidylinositol 4-kinase lsb6 (lsb6) from Schizosaccharomyces pombe (strain 972 / ATCC 24843) (Fission yeast).